The chain runs to 300 residues: N-acetylmuramic acid 6-phosphate etherase (300 aa).

Residues 57–220 enclose the SIS domain; the sequence is VAAALRAGGR…STGAMIRIGK (164 aa). Catalysis depends on Glu-85, which acts as the Proton donor. Glu-116 is a catalytic residue.

The protein belongs to the GCKR-like family. MurNAc-6-P etherase subfamily. Homodimer.

It carries out the reaction N-acetyl-D-muramate 6-phosphate + H2O = N-acetyl-D-glucosamine 6-phosphate + (R)-lactate. Its pathway is amino-sugar metabolism; 1,6-anhydro-N-acetylmuramate degradation. It functions in the pathway amino-sugar metabolism; N-acetylmuramate degradation. It participates in cell wall biogenesis; peptidoglycan recycling. Functionally, specifically catalyzes the cleavage of the D-lactyl ether substituent of MurNAc 6-phosphate, producing GlcNAc 6-phosphate and D-lactate. Together with AnmK, is also required for the utilization of anhydro-N-acetylmuramic acid (anhMurNAc) either imported from the medium or derived from its own cell wall murein, and thus plays a role in cell wall recycling. This is N-acetylmuramic acid 6-phosphate etherase from Klebsiella aerogenes (Enterobacter aerogenes).